The chain runs to 351 residues: Dysbindin (351 aa).

The stretch at 106–179 forms a coiled coil; that stretch reads FLADLECLTA…AELDAEHAQK (74 aa). The segment at 291–325 is disordered; it reads RHKLSSLSSTCTDSASQEASEGESPVVQSDEEEVQ. Residues 295 to 306 are compositionally biased toward low complexity; sequence SSLSSTCTDSAS.

Belongs to the dysbindin family. Component of the biogenesis of lysosome-related organelles complex 1 (BLOC-1).

The protein resides in the cytoplasm. The protein localises to the cytoplasmic vesicle membrane. Its subcellular location is the cytoplasmic vesicle. It localises to the secretory vesicle. It is found in the synaptic vesicle membrane. The protein resides in the endosome membrane. The protein localises to the melanosome membrane. Its subcellular location is the nucleus. It localises to the postsynaptic density. It is found in the endoplasmic reticulum. In terms of biological role, component of the BLOC-1 complex, a complex that is required for normal biogenesis of lysosome-related organelles (LRO), such as platelet dense granules and melanosomes. Plays a role in intracellular vesicle trafficking. Plays a role in synaptic vesicle trafficking and in neurotransmitter release. May be required for normal dopamine homeostasis in the cerebral cortex, hippocampus, and hypothalamus. Plays a role in the regulation of cell surface exposure of DRD2. Contributes to the regulation of dopamine signaling. May play a role in actin cytoskeleton reorganization and neurite outgrowth. This is Dysbindin (DTNBP1) from Gallus gallus (Chicken).